Consider the following 356-residue polypeptide: Histidinol-phosphate aminotransferase 2 (356 aa).

N6-(pyridoxal phosphate)lysine is present on K214.

Belongs to the class-II pyridoxal-phosphate-dependent aminotransferase family. Histidinol-phosphate aminotransferase subfamily. Homodimer. Requires pyridoxal 5'-phosphate as cofactor.

It carries out the reaction L-histidinol phosphate + 2-oxoglutarate = 3-(imidazol-4-yl)-2-oxopropyl phosphate + L-glutamate. Its pathway is amino-acid biosynthesis; L-histidine biosynthesis; L-histidine from 5-phospho-alpha-D-ribose 1-diphosphate: step 7/9. The protein is Histidinol-phosphate aminotransferase 2 of Dechloromonas aromatica (strain RCB).